The sequence spans 171 residues: Sorcin (171 aa).

4 EF-hand domains span residues 3–38 (MDTN…GLGT), 40–69 (LNIR…LGLF), 70–105 (KYVQ…FGYH), and 106–140 (LSPQ…LQTL). Residues aspartate 16, aspartate 18, serine 20, serine 22, glutamate 27, aspartate 53, aspartate 55, asparagine 57, threonine 59, glutamate 64, aspartate 83, aspartate 85, serine 87, serine 89, and glutamate 94 each coordinate Ca(2+).

It localises to the cytoplasm. Calcium-binding protein. The chain is Sorcin from Schistosoma japonicum (Blood fluke).